Reading from the N-terminus, the 455-residue chain is Putative O-acetyltransferase SAT14 (455 aa).

It belongs to the lysine N-acyltransferase MbtK family.

It functions in the pathway mycotoxin biosynthesis. In terms of biological role, putative O-acetyltransferase; part of the satratoxin SC2 cluster involved in the biosynthesis of satratoxins, trichothecene mycotoxins that are associated with human food poisonings. Satratoxins are suggested to be made by products of multiple gene clusters (SC1, SC2 and SC3) that encode 21 proteins in all, including polyketide synthases, acetyltransferases, and other enzymes expected to modify the trichothecene skeleton. SC1 encodes 10 proteins, SAT1 to SAT10. The largest are SAT8, which encodes a putative polyketide synthase (PKS) with a conventional non-reducing architecture, and SAT10, a putative protein containing four ankyrin repeats and thus may be involved in protein scaffolding. The putative short-chain reductase SAT3 may assist the PKS in some capacity. SAT6 contains a secretory lipase domain and acts probably as a trichothecene esterase. SAT5 encodes a putative acetyltransferase, and so, with SAT6, may affect endogenous protection from toxicity. The probable transcription factor SAT9 may regulate the expression of the SC1 cluster. SC2 encodes proteins SAT11 to SAT16, the largest of which encodes the putative reducing PKS SAT13. SAT11 is a cytochrome P450 monooxygenase, while SAT14 and SAT16 are probable acetyltransferases. The SC2 cluster may be regulated by the transcription factor SAT15. SC3 is a small cluster that encodes 5 proteins, SAT17 to SAT21. SAT21 is a putative MFS-type transporter which may have a role in exporting secondary metabolites. The four other proteins putatively encoded in SC3 include the taurine hydroxylase-like protein SAT17, the O-methyltransferase SAT18, the acetyltransferase SAT19, and the Cys6-type zinc finger SAT20, the latter being probably involved in regulation of SC3 expression. This is Putative O-acetyltransferase SAT14 from Stachybotrys chartarum (strain CBS 109288 / IBT 7711) (Toxic black mold).